Reading from the N-terminus, the 250-residue chain is Recombination protein RecR (250 aa).

The C4-type zinc-finger motif lies at 56–71; the sequence is CRICHNISQEDVCRIC. The Toprim domain maps to 79–227; that stretch reads SIICVVEESK…TVTRLASGIP (149 aa). The tract at residues 148–172 is disordered; the sequence is LGDADTPADGESSGADAAETGNAKT.

The protein belongs to the RecR family.

In terms of biological role, may play a role in DNA repair. It seems to be involved in an RecBC-independent recombinational process of DNA repair. It may act with RecF and RecO. The protein is Recombination protein RecR of Corynebacterium jeikeium (strain K411).